The chain runs to 1870 residues: Dedicator of cytokinesis protein 5 (1870 aa).

In terms of domain architecture, SH3 spans 8 to 69 (KRQKYGVAIY…PETYIHLKEA (62 aa)). Ser-365 is modified (phosphoserine). The region spanning 443 to 627 (RNDIYVTLIH…DSFQIATLIC (185 aa)) is the C2 DOCK-type domain. The residue at position 818 (Lys-818) is an N6-acetyllysine. One can recognise a DOCKER domain in the interval 1231–1642 (YKEKKREDIY…VEKHYGVITL (412 aa)). A disordered region spans residues 1679 to 1702 (VVSTSSNSSDNAPSRPGSDGSILE). Residues Ser-1756, Ser-1766, Ser-1785, and Ser-1789 each carry the phosphoserine modification. Residues 1772 to 1870 (NRLSPFHGSS…GIPTSEPGSQ (99 aa)) form a disordered region. A compositionally biased stretch (pro residues) spans 1784 to 1794 (QSTPLSPPPLT). Thr-1794 carries the post-translational modification Phosphothreonine. Residues 1797–1808 (ATRTLSSPSLQT) show a composition bias toward polar residues. Position 1814 is a phosphothreonine (Thr-1814). Positions 1815–1824 (PVPPPPPPKS) are enriched in pro residues. A phosphoserine mark is found at Ser-1834 and Ser-1869.

The protein belongs to the DOCK family. Interacts with CRK and CRKL. Interacts (via N-terminus) with tensin TNS3 (via N-terminus); the interaction increases DOCK5 guanine nucleotide exchange activity towards Rac. Interacts with ELMO1.

The protein resides in the cytoplasm. It is found in the cell membrane. Its subcellular location is the cell projection. It localises to the podosome. Guanine nucleotide exchange factor (GEF) for Rho and Rac. GEF proteins activate small GTPases by exchanging bound GDP for free GTP. Along with DOCK1, mediates CRK/CRKL regulation of epithelial and endothelial cell spreading and migration on type IV collagen. This Homo sapiens (Human) protein is Dedicator of cytokinesis protein 5 (DOCK5).